The primary structure comprises 84 residues: Translation initiation factor IF-1, chloroplastic (84 aa).

Residues 1–72 (MKKQNLVEME…SKGRITYRLR (72 aa)) form the S1-like domain.

This sequence belongs to the IF-1 family. Component of the 30S ribosomal translation pre-initiation complex which assembles on the 30S ribosome in the order IF-2 and IF-3, IF-1 and N-formylmethionyl-tRNA(fMet); mRNA recruitment can occur at any time during PIC assembly.

The protein localises to the plastid. It localises to the chloroplast. Its function is as follows. One of the essential components for the initiation of protein synthesis. Stabilizes the binding of IF-2 and IF-3 on the 30S subunit to which N-formylmethionyl-tRNA(fMet) subsequently binds. Helps modulate mRNA selection, yielding the 30S pre-initiation complex (PIC). Upon addition of the 50S ribosomal subunit IF-1, IF-2 and IF-3 are released leaving the mature 70S translation initiation complex. The protein is Translation initiation factor IF-1, chloroplastic of Spirogyra maxima (Green alga).